The sequence spans 251 residues: Phosphate import ATP-binding protein PstB 2 (251 aa).

Residues 5 to 246 (ITTKDVHLYY…PDKEQTADYL (242 aa)) enclose the ABC transporter domain. An ATP-binding site is contributed by 37–44 (GPSGCGKS).

This sequence belongs to the ABC transporter superfamily. Phosphate importer (TC 3.A.1.7) family. As to quaternary structure, the complex is composed of two ATP-binding proteins (PstB), two transmembrane proteins (PstC and PstA) and a solute-binding protein (PstS).

Its subcellular location is the cell membrane. The enzyme catalyses phosphate(out) + ATP + H2O = ADP + 2 phosphate(in) + H(+). Its function is as follows. Part of the ABC transporter complex PstSACB involved in phosphate import. Responsible for energy coupling to the transport system. The chain is Phosphate import ATP-binding protein PstB 2 from Ligilactobacillus salivarius (strain UCC118) (Lactobacillus salivarius).